The chain runs to 55 residues: Large ribosomal subunit protein bL32c (55 aa).

Belongs to the bacterial ribosomal protein bL32 family.

It localises to the plastid. The protein resides in the chloroplast. In Nicotiana sylvestris (Wood tobacco), this protein is Large ribosomal subunit protein bL32c.